The sequence spans 413 residues: RRLSLHEYLSMGLLQEAGISVPHGVVARTPDEAYKIAKEIGSKDLVIKAQVLAGGRGKGTFEGGLKGGVKIVFSPEEAKAVSSRMIGKKLFTKQTGEKGRICNQVFVCERRYPRREYYFAITMERSFQGPVLIGSSQGGVNIEDVAAENPDAIIKEPIDIVEGIKKEQAVRLAQKMGFPSNLVDEAAENMIKLYNLFLKYDATMIEINPMVEDASGVVMCMDAKINFDSNSAYRQKKIFDMQDWTQEDERDRQAAKADLNYIGLDGNIGCLVNGAGLAMATMDIIKLHGGTPANFLDVGGGATVHQVTEAFKLITSDKKVLAILVNIFGGIMRCDVIAQGIVVAVKDLDLKIPVVVRLQGTRVDDAKALITASGLKILACDDLDEAAKMVVKLSEIVTLAKQAHLDVKFQLPI.

Residues 1-2 (RR) constitute a mitochondrion transit peptide. The ATP-grasp domain occupies 11 to 238 (MGLLQEAGIS…SNSAYRQKKI (228 aa)). ATP contacts are provided by residues K48 and 55–57 (GRG). Mg(2+) contacts are provided by N208 and D222. Residues N273 and 330–332 (GIM) each bind substrate.

The protein belongs to the succinate/malate CoA ligase beta subunit family. ATP-specific subunit beta subfamily. As to quaternary structure, heterodimer of an alpha and a beta subunit. The beta subunit determines specificity for ATP. Requires Mg(2+) as cofactor. In terms of tissue distribution, widely expressed. Not present in liver.

The protein localises to the mitochondrion. It catalyses the reaction succinate + ATP + CoA = succinyl-CoA + ADP + phosphate. It participates in carbohydrate metabolism; tricarboxylic acid cycle; succinate from succinyl-CoA (ligase route): step 1/1. ATP-specific succinyl-CoA synthetase functions in the citric acid cycle (TCA), coupling the hydrolysis of succinyl-CoA to the synthesis of ATP and thus represents the only step of substrate-level phosphorylation in the TCA. The beta subunit provides nucleotide specificity of the enzyme and binds the substrate succinate, while the binding sites for coenzyme A and phosphate are found in the alpha subunit. The sequence is that of Succinate--CoA ligase [ADP-forming] subunit beta, mitochondrial from Columba livia (Rock dove).